Consider the following 196-residue polypeptide: DnaA initiator-associating protein DiaA (196 aa).

One can recognise an SIS domain in the interval 34–196 (LVQSLLNGNK…DNTLFPHQDD (163 aa)).

It belongs to the SIS family. DiaA subfamily. Homotetramer; dimer of dimers.

In terms of biological role, required for the timely initiation of chromosomal replication via direct interactions with the DnaA initiator protein. The protein is DnaA initiator-associating protein DiaA of Enterobacter sp. (strain 638).